Here is a 631-residue protein sequence, read N- to C-terminus: Iron transport multicopper oxidase FET3 (631 aa).

Positions 1–25 are cleaved as a signal peptide; that stretch reads MKVSTHHFLPSLLVALWSWATVAQA. The Extracellular segment spans residues 26–564; the sequence is ATHTFNWTTG…ANIPDGFTAK (539 aa). 2 N-linked (GlcNAc...) asparagine glycosylation sites follow: Asn31 and Asn81. Plastocyanin-like domains lie at 50–148 and 195–297; these read ITCN…LVVE and NLII…LMLN. Residues His85 and His87 each coordinate Cu cation. 2 N-linked (GlcNAc...) asparagine glycosylation sites follow: Asn92 and Asn117. Residues His130 and His132 each coordinate Cu cation. Asn199, Asn203, Asn249, Asn270, Asn297, Asn364, and Asn413 each carry an N-linked (GlcNAc...) asparagine glycan. Residues 387 to 506 form the Plastocyanin-like 3 domain; sequence NPLVYGTNTN…QGLALLLIEA (120 aa). The Cu cation site is built by His418, His421, His423, His488, Cys489, His490, and His494. Residues 565 to 585 traverse the membrane as a helical segment; it reads GIVAMTFSCLAGVLGLISLST. Residues 586–630 lie on the Cytoplasmic side of the membrane; that stretch reads YGLMGVKKSEEEIIRDLGMDPDAVEKVDVSDINSDEDSSRTSKNI. A disordered region spans residues 610–631; sequence EKVDVSDINSDEDSSRTSKNIE. Positions 622 to 631 are enriched in basic and acidic residues; sequence DSSRTSKNIE.

The protein belongs to the multicopper oxidase family. Cu cation is required as a cofactor.

The protein resides in the cell membrane. Functionally, iron transport multicopper ferroxidase required for Fe(2+) high affinity uptake. Required to oxidize Fe(2+) and release it from the transporter. Essential component of copper-dependent iron transport. The sequence is that of Iron transport multicopper oxidase FET3 (FET3) from Kluyveromyces lactis (strain ATCC 8585 / CBS 2359 / DSM 70799 / NBRC 1267 / NRRL Y-1140 / WM37) (Yeast).